Here is a 98-residue protein sequence, read N- to C-terminus: Large ribosomal subunit protein uL23 (98 aa).

Belongs to the universal ribosomal protein uL23 family. In terms of assembly, part of the 50S ribosomal subunit. Contacts protein L29, and trigger factor when it is bound to the ribosome.

One of the early assembly proteins it binds 23S rRNA. One of the proteins that surrounds the polypeptide exit tunnel on the outside of the ribosome. Forms the main docking site for trigger factor binding to the ribosome. The protein is Large ribosomal subunit protein uL23 of Clostridium kluyveri (strain NBRC 12016).